We begin with the raw amino-acid sequence, 261 residues long: CD40 ligand (261 aa).

The Cytoplasmic segment spans residues 1–22 (MIETYNQTSPRSAATGLPISMK). The helical; Signal-anchor for type II membrane protein transmembrane segment at 23–46 (IFMYLLTVFLITQMIGSALFAVYL) threads the bilayer. Residues 47-261 (HRRLDKIEDE…GFTSFGLLKL (215 aa)) lie on the Extracellular side of the membrane. The THD domain occupies 122–261 (IAAHVISEAS…GFTSFGLLKL (140 aa)). Cysteine 178 and cysteine 218 are joined by a disulfide. Asparagine 240 carries an N-linked (GlcNAc...) (complex) asparagine; alternate glycan. An N-linked (GlcNAc...) (high mannose) asparagine; alternate glycan is attached at asparagine 240.

It belongs to the tumor necrosis factor family. In terms of assembly, homotrimer. Interacts with isoform 3 of CD28. CD40 ligand, soluble form: Exists as either a monomer or a homotrimer. Forms a ternary complex between CD40 and integrins for CD40-CD40LG signaling. Post-translationally, the soluble form derives from the membrane form by proteolytic processing. N-linked glycan is a mixture of high mannose and complex type. Glycan structure does not influence binding affinity to CD40. In terms of processing, not O-glycosylated. In terms of tissue distribution, specifically expressed on activated CD4+ T-lymphocytes.

It is found in the cell membrane. The protein resides in the cell surface. Its subcellular location is the secreted. Functionally, cytokine that acts as a ligand to CD40/TNFRSF5. Costimulates T-cell proliferation and cytokine production. Its cross-linking on T-cells generates a costimulatory signal which enhances the production of IL4 and IL10 in conjunction with the TCR/CD3 ligation and CD28 costimulation. Induces the activation of NF-kappa-B. Induces the activation of kinases MAPK8 and PAK2 in T-cells. Induces tyrosine phosphorylation of isoform 3 of CD28. Mediates B-cell proliferation in the absence of co-stimulus as well as IgE production in the presence of IL4. Involved in immunoglobulin class switching. In terms of biological role, acts as a ligand for integrins, specifically ITGA5:ITGB1 and ITGAV:ITGB3; both integrins and the CD40 receptor are required for activation of CD40-CD40LG signaling, which have cell-type dependent effects, such as B-cell activation, NF-kappa-B signaling and anti-apoptotic signaling. This chain is CD40 ligand (CD40LG), found in Homo sapiens (Human).